Here is a 1242-residue protein sequence, read N- to C-terminus: DNA excision repair protein ERCC-6-like (1242 aa).

Ser-14 is modified (phosphoserine). Residues 21–54 form a TPR 1 repeat; sequence YLRYVKEAKEATKNGDLEQALKLFNLAKDIFPNE. One can recognise a Helicase ATP-binding domain in the interval 109–277; sequence SLYRDGRRGG…WSLFDFACQG (169 aa). Residue 122 to 129 coordinates ATP; it reads DDMGLGKT. Positions 228–231 match the DEAH box motif; the sequence is DEAH. Residues 466-626 form the Helicase C-terminal domain; it reads FLMDLLKKLR…PFRYFSKQEL (161 aa). 2 positions are modified to phosphoserine: Ser-755 and Ser-773. Position 815 is a phosphothreonine (Thr-815). Residues Ser-963, Ser-989, Ser-998, and Ser-1021 each carry the phosphoserine modification. Thr-1055 carries the post-translational modification Phosphothreonine. 3 positions are modified to phosphoserine: Ser-1061, Ser-1090, and Ser-1110. Residues 1103–1181 form a disordered region; the sequence is EERLDNSSEA…LSDGQLVDSP (79 aa). 2 stretches are compositionally biased toward basic and acidic residues: residues 1105-1121 and 1130-1140; these read RLDN…HLEE and APEHTKEDPSR. A compositionally biased stretch (polar residues) spans 1141–1156; it reads ETLSSENKSSQLSTSK. Phosphoserine is present on residues Ser-1173 and Ser-1180. The stretch at 1192–1225 is one TPR 2 repeat; it reads YDTLVLHGKELKECGKIQEALDCLVKALDIKSSD.

The protein belongs to the SNF2/RAD54 helicase family. In terms of assembly, interacts with PLK1, which phosphorylates it. Both proteins are mutually dependent on each other for correct subcellular localization. Interacts (via N-terminal TPR repeat) with BEND3 (via BEN domains 1 and 3); the interaction is direct. In terms of processing, phosphorylation by PLK1 prevents the association with chromosome arms and restricts its localization to the kinetochore-centromere region.

It is found in the chromosome. The protein resides in the centromere. It localises to the kinetochore. It carries out the reaction ATP + H2O = ADP + phosphate + H(+). Functionally, DNA helicase that acts as a tension sensor that associates with catenated DNA which is stretched under tension until it is resolved during anaphase. Functions as ATP-dependent DNA translocase. Can promote Holliday junction branch migration (in vitro). The sequence is that of DNA excision repair protein ERCC-6-like (ERCC6L) from Bos taurus (Bovine).